Here is a 229-residue protein sequence, read N- to C-terminus: Lipoprotein-releasing system ATP-binding protein LolD (229 aa).

Residues 9-228 (HGLRKIYREA…QDGNLVQVEV (220 aa)) enclose the ABC transporter domain. 42-49 (GSSGSGKS) contributes to the ATP binding site.

It belongs to the ABC transporter superfamily. Lipoprotein translocase (TC 3.A.1.125) family. The complex is composed of two ATP-binding proteins (LolD) and two transmembrane proteins (LolC and LolE).

Its subcellular location is the cell inner membrane. Part of the ABC transporter complex LolCDE involved in the translocation of mature outer membrane-directed lipoproteins, from the inner membrane to the periplasmic chaperone, LolA. Responsible for the formation of the LolA-lipoprotein complex in an ATP-dependent manner. This is Lipoprotein-releasing system ATP-binding protein LolD from Photobacterium profundum (strain SS9).